We begin with the raw amino-acid sequence, 139 residues long: Hydrogenase maturation factor HypA (139 aa).

A Ni(2+)-binding site is contributed by histidine 2. Residues cysteine 73, cysteine 76, cysteine 110, and cysteine 113 each contribute to the Zn(2+) site.

Belongs to the HypA/HybF family.

Its function is as follows. Involved in the maturation of [NiFe] hydrogenases. Required for nickel insertion into the metal center of the hydrogenase. The chain is Hydrogenase maturation factor HypA from Thermococcus gammatolerans (strain DSM 15229 / JCM 11827 / EJ3).